Reading from the N-terminus, the 218-residue chain is Type II restriction enzyme KpnI (218 aa).

It catalyses the reaction Endonucleolytic cleavage of DNA to give specific double-stranded fragments with terminal 5'-phosphates.. Functionally, a P subtype restriction enzyme that recognizes the double-stranded sequence 5'-GGTACC-3' and cleaves after C-5. In Klebsiella pneumoniae, this protein is Type II restriction enzyme KpnI.